A 193-amino-acid chain; its full sequence is Xanthine phosphoribosyltransferase (193 aa).

Xanthine-binding residues include leucine 20 and asparagine 27. 129-133 (ANGKA) is a 5-phospho-alpha-D-ribose 1-diphosphate binding site. Xanthine is bound at residue lysine 157.

This sequence belongs to the purine/pyrimidine phosphoribosyltransferase family. Xpt subfamily. As to quaternary structure, homodimer.

It is found in the cytoplasm. It catalyses the reaction XMP + diphosphate = xanthine + 5-phospho-alpha-D-ribose 1-diphosphate. The protein operates within purine metabolism; XMP biosynthesis via salvage pathway; XMP from xanthine: step 1/1. Its function is as follows. Converts the preformed base xanthine, a product of nucleic acid breakdown, to xanthosine 5'-monophosphate (XMP), so it can be reused for RNA or DNA synthesis. This chain is Xanthine phosphoribosyltransferase, found in Bifidobacterium animalis subsp. lactis (strain AD011).